The primary structure comprises 453 residues: Ribosomal protein uS12 methylthiotransferase RimO (453 aa).

The MTTase N-terminal domain occupies 5 to 120 (PKVGFVSLGC…VMQAVHSHLP (116 aa)). The [4Fe-4S] cluster site is built by Cys14, Cys50, Cys79, Cys151, Cys155, and Cys158. Positions 137–382 (LTPRHYAYLK…MEVAEEVSAR (246 aa)) constitute a Radical SAM core domain. A TRAM domain is found at 385 to 453 (QRKVGKTLKV…ADGHDLWGEV (69 aa)).

It belongs to the methylthiotransferase family. RimO subfamily. It depends on [4Fe-4S] cluster as a cofactor.

The protein localises to the cytoplasm. It catalyses the reaction L-aspartate(89)-[ribosomal protein uS12]-hydrogen + (sulfur carrier)-SH + AH2 + 2 S-adenosyl-L-methionine = 3-methylsulfanyl-L-aspartate(89)-[ribosomal protein uS12]-hydrogen + (sulfur carrier)-H + 5'-deoxyadenosine + L-methionine + A + S-adenosyl-L-homocysteine + 2 H(+). In terms of biological role, catalyzes the methylthiolation of an aspartic acid residue of ribosomal protein uS12. The sequence is that of Ribosomal protein uS12 methylthiotransferase RimO from Burkholderia vietnamiensis (strain G4 / LMG 22486) (Burkholderia cepacia (strain R1808)).